The primary structure comprises 1078 residues: Carbamoyl phosphate synthase large chain (1078 aa).

The carboxyphosphate synthetic domain stretch occupies residues 1 to 401; it reads MARQPLVSSV…ALQKAVRGLE (401 aa). Arg129, Arg169, Gly175, Gly176, Arg208, Leu210, Glu215, Gly241, Val242, His243, Gln284, and Glu298 together coordinate ATP. Residues 133–327 form the ATP-grasp 1 domain; that stretch reads KELLLEIGEP…IARIAAKLAI (195 aa). Residues Gln284, Glu298, and Asn300 each contribute to the Mg(2+) site. Mn(2+)-binding residues include Gln284, Glu298, and Asn300. The oligomerization domain stretch occupies residues 402-546; that stretch reads TDQTDLTWED…YATYEDENEA (145 aa). The tract at residues 547 to 935 is carbamoyl phosphate synthetic domain; it reads PPLDSPKAVV…ALAKAFLAAG (389 aa). In terms of domain architecture, ATP-grasp 2 spans 677 to 867; it reads ERFLHELGIP…MVDVATQILL (191 aa). ATP is bound by residues Arg713, Lys752, Leu754, Glu758, Gly783, Val784, His785, Ser786, Gln826, and Glu838. Residues Gln826, Glu838, and Asn840 each coordinate Mg(2+). The Mn(2+) site is built by Gln826, Glu838, and Asn840. The region spanning 936 to 1078 is the MGS-like domain; the sequence is LAIERGAPVL…AYRTREAVLA (143 aa). Residues 936–1078 form an allosteric domain region; that stretch reads LAIERGAPVL…AYRTREAVLA (143 aa).

This sequence belongs to the CarB family. As to quaternary structure, composed of two chains; the small (or glutamine) chain promotes the hydrolysis of glutamine to ammonia, which is used by the large (or ammonia) chain to synthesize carbamoyl phosphate. Tetramer of heterodimers (alpha,beta)4. Mg(2+) is required as a cofactor. Requires Mn(2+) as cofactor.

It carries out the reaction hydrogencarbonate + L-glutamine + 2 ATP + H2O = carbamoyl phosphate + L-glutamate + 2 ADP + phosphate + 2 H(+). The enzyme catalyses hydrogencarbonate + NH4(+) + 2 ATP = carbamoyl phosphate + 2 ADP + phosphate + 2 H(+). It participates in amino-acid biosynthesis; L-arginine biosynthesis; carbamoyl phosphate from bicarbonate: step 1/1. It functions in the pathway pyrimidine metabolism; UMP biosynthesis via de novo pathway; (S)-dihydroorotate from bicarbonate: step 1/3. Its function is as follows. Large subunit of the glutamine-dependent carbamoyl phosphate synthetase (CPSase). CPSase catalyzes the formation of carbamoyl phosphate from the ammonia moiety of glutamine, carbonate, and phosphate donated by ATP, constituting the first step of 2 biosynthetic pathways, one leading to arginine and/or urea and the other to pyrimidine nucleotides. The large subunit (synthetase) binds the substrates ammonia (free or transferred from glutamine from the small subunit), hydrogencarbonate and ATP and carries out an ATP-coupled ligase reaction, activating hydrogencarbonate by forming carboxy phosphate which reacts with ammonia to form carbamoyl phosphate. In Thermomicrobium roseum (strain ATCC 27502 / DSM 5159 / P-2), this protein is Carbamoyl phosphate synthase large chain.